A 193-amino-acid chain; its full sequence is Copper-binding lipoprotein NosL (193 aa).

Positions methionine 1–alanine 19 are cleaved as a signal peptide. Cysteine 20 carries the N-palmitoyl cysteine lipid modification. Cysteine 20 carries the S-diacylglycerol cysteine lipid modification.

Belongs to the NosL family. Monomer. Apo-NosL can form homodimers.

Its subcellular location is the cell membrane. Functionally, may act as a metallochaperone involved in nitrous oxide reductase assembly. Specifically binds Cu(+). The polypeptide is Copper-binding lipoprotein NosL (Achromobacter cycloclastes).